A 53-amino-acid chain; its full sequence is uncharacterized protein (53 aa).

Residues 26-46 (CYLLFCFLECFLNLFKKCGVF) traverse the membrane as a helical segment.

Belongs to the plectrovirus ORF11 family.

Its subcellular location is the host membrane. This is an uncharacterized protein from Spiroplasma virus SpV1-R8A2 B (SpV1).